Consider the following 359-residue polypeptide: Homeotic protein knotted-1 (359 aa).

Disordered regions lie at residues M1–S34 and L213–P232. Residues G16–P31 show a composition bias toward basic residues. Residues E242–L262 form the ELK domain. A DNA-binding region (homeobox; TALE-type) is located at residues S263–S326.

This sequence belongs to the TALE/KNOX homeobox family. In terms of assembly, forms homodimers. Binds to MBP2C; this interaction reduces RNA binding capacity. In terms of tissue distribution, expressed in apical meristems of vegetative and floral stems as well as in the underlying ground meristem. Specifically expressed in vascular bundles developing both in the leaf and stem. Very low levels of expression in leaves.

It localises to the nucleus. The protein localises to the cell junction. Its subcellular location is the plasmodesma. The protein resides in the cytoplasm. In terms of biological role, binds to RNA. Possible transcription factor that regulates genes involved in development. Mutations in KN-1 alter leaf development. Foci of cells along the lateral vein do not differentiate properly but continue to divide, forming knots. May participate in the switch from indeterminate to determinate cell fates. Probably binds to the DNA sequence 5'-TGAC-3'. In Zea mays (Maize), this protein is Homeotic protein knotted-1 (KN-1).